Here is a 584-residue protein sequence, read N- to C-terminus: J protein JJJ2 (584 aa).

The J domain occupies 13–77 (TYYSILGLTS…DQKLRYDRDL (65 aa)). The segment at 216–312 (YSEDPNSCLG…FSSGSHDSNL (97 aa)) is disordered. Phosphoserine is present on S229. A compositionally biased stretch (low complexity) spans 241-253 (QQQQQQQQQQQQQ). The span at 269 to 282 (KDNKESKRESRVSP) shows a compositional bias: basic and acidic residues. Residues 299 to 312 (KTSTFSSGSHDSNL) show a composition bias toward polar residues.

It is found in the cytoplasm. The protein localises to the nucleus. This Saccharomyces cerevisiae (strain YJM789) (Baker's yeast) protein is J protein JJJ2 (JJJ2).